Here is a 1037-residue protein sequence, read N- to C-terminus: Signal-induced proliferation-associated protein 1 (1037 aa).

Positions 1–85 (MWAGGVGSPR…ASRPAATPTR (85 aa)) are disordered. T62 bears the Phosphothreonine mark. Phosphoserine occurs at positions 65, 178, 299, and 309. A Rap-GAP domain is found at 316 to 534 (LLTLDEQVLS…RTRQQYLQDL (219 aa)). A PDZ domain is found at 682–758 (ELALPRDGQG…VCVTVLPPDE (77 aa)). Residues S812 and S834 each carry the phosphoserine modification. 2 disordered regions span residues 830–849 (HNSL…LPNT) and 855–898 (LVTT…ASIL). The segment covering 871 to 881 (PPSQDQSGSPS) has biased composition (low complexity). S907 carries the phosphoserine modification. Residues 943–969 (REGQPISESGDPKEALKCDSEPEPGSL) form a disordered region. The segment covering 952–962 (GDPKEALKCDS) has biased composition (basic and acidic residues). The stretch at 968 to 1025 (SLSEKVSHLESMLWKLQEDLQREKADRAALEEEVRSLRHNNQRLLAESESAATRLLLA) forms a coiled coil.

In terms of assembly, interacts with RRP1B; the interaction leads to inhibition of SIPA1 GTPase activity. As to expression, preferentially expressed in both fetal and adult lymphohematopoietic tissues.

It localises to the nucleus. Its subcellular location is the cytoplasm. The protein resides in the perinuclear region. The protein localises to the endomembrane system. Functionally, GTPase activator for the nuclear Ras-related regulatory proteins Rap1, Rsr1 and Ran in vitro, converting them to the putatively inactive GDP-bound state. Affects cell cycle progression. This is Signal-induced proliferation-associated protein 1 (Sipa1) from Mus musculus (Mouse).